A 79-amino-acid polypeptide reads, in one-letter code: Small ribosomal subunit protein bS21 (79 aa).

Composition is skewed to basic residues over residues Arg-47–Lys-59 and Gly-69–Thr-79. The tract at residues Arg-47–Thr-79 is disordered.

This sequence belongs to the bacterial ribosomal protein bS21 family.

The chain is Small ribosomal subunit protein bS21 from Legionella pneumophila (strain Paris).